The primary structure comprises 152 residues: Neuropeptide W (152 aa).

Positions 1–32 (MGARGPGPGATARRRLLALLLLLLLLPLPARA) are cleaved as a signal peptide. Residues 65 to 152 (ALRPAAGPLA…LGASSWTSAE (88 aa)) constitute a propeptide that is removed on maturation. Disordered regions lie at residues 79–108 (GQDV…LPPG) and 122–152 (SGIP…TSAE). Pro residues predominate over residues 96–106 (GPAPRDAPLLP).

It belongs to the neuropeptide B/W family.

The protein resides in the secreted. Its function is as follows. Plays a regulatory role in the organization of neuroendocrine signals accessing the anterior pituitary gland. Stimulates water drinking and food intake. May play a role in the hypothalamic response to stress. The protein is Neuropeptide W (NPW) of Sus scrofa (Pig).